We begin with the raw amino-acid sequence, 564 residues long: Myb-like protein F (564 aa).

3 disordered regions span residues 22–107, 122–203, and 310–410; these read YNNS…NYNN, NYNN…YNGG, and NYNN…TKKY. Positions 23–79 are enriched in low complexity; the sequence is NNSNHYNDNNDNNNNNNNNNNDNNNNDNNNNNNNNNNSIINNESDNESNGTSNNYND. Residues 82–96 are compositionally biased toward basic and acidic residues; sequence NDNHHHHQDDEHHGN. 4 stretches are compositionally biased toward low complexity: residues 97–107, 135–173, 193–203, and 310–364; these read GNDNDNENYNN, EINS…NNSK, NNNNNNKYNGG, and NYNN…NSSN. Over residues 365-409 the composition is skewed to basic and acidic residues; that stretch reads KEYKEKEYKEKEYKEKEFKESKDSSLKRKSSSDDDGDDSGRDTKK. The SANT domain maps to 412-464; sequence PGRTVWTLEEEELYKEVFNHYGKNWKKIKTHFPDKSKSQVTSHGQYLIKINKL. The span at 519-556 shows a compositional bias: low complexity; sequence NNENTNDNNNHNNNNYNDNNNNSNNNNNFNNSNNNNTN. The tract at residues 519-564 is disordered; that stretch reads NNENTNDNNNHNNNNYNDNNNNSNNNNNFNNSNNNNTNKFIDEDDD.

It localises to the nucleus. This Dictyostelium discoideum (Social amoeba) protein is Myb-like protein F (mybF).